The sequence spans 405 residues: tRNA (uracil(54)-C(5))-methyltransferase (405 aa).

4 residues coordinate [4Fe-4S] cluster: cysteine 61, cysteine 67, cysteine 70, and cysteine 137. S-adenosyl-L-methionine-binding positions include glutamine 252, tyrosine 278, threonine 283, 299-300 (DS), aspartate 326, and aspartate 340. The Nucleophile role is filled by cysteine 367. Glutamate 399 functions as the Proton acceptor in the catalytic mechanism.

This sequence belongs to the class I-like SAM-binding methyltransferase superfamily. RNA M5U methyltransferase family.

The catalysed reaction is uridine(54) in tRNA + S-adenosyl-L-methionine = 5-methyluridine(54) in tRNA + S-adenosyl-L-homocysteine + H(+). With respect to regulation, activated by magnesium ions. Catalyzes the formation of 5-methyl-uridine at position 54 (m5U54) in tRNA. In Pyrococcus abyssi (strain GE5 / Orsay), this protein is tRNA (uracil(54)-C(5))-methyltransferase.